Consider the following 211-residue polypeptide: Germin-like protein subfamily 3 member 3 (211 aa).

Positions 1 to 20 (MKMIIQIFFIISLISTISFA) are cleaved as a signal peptide. Cysteines 26 and 41 form a disulfide. The Cupin type-1 domain maps to 55–201 (TGLGTAGNTS…TTFLSDAEVK (147 aa)). The N-linked (GlcNAc...) asparagine glycan is linked to Asn62. Mn(2+)-binding residues include His103, His105, and Glu110. Ser140 is modified (phosphoserine). His149 is a binding site for Mn(2+).

The protein belongs to the germin family. As to quaternary structure, oligomer (believed to be a pentamer but probably hexamer). As to expression, expressed in leaves and flowers.

It localises to the secreted. Its subcellular location is the extracellular space. The protein localises to the apoplast. Its function is as follows. May play a role in plant defense. Probably has no oxalate oxidase activity even if the active site is conserved. The sequence is that of Germin-like protein subfamily 3 member 3 (GER3) from Arabidopsis thaliana (Mouse-ear cress).